The sequence spans 465 residues: 3-isopropylmalate dehydratase large subunit (465 aa).

Residues Cys-347, Cys-407, and Cys-410 each coordinate [4Fe-4S] cluster.

This sequence belongs to the aconitase/IPM isomerase family. LeuC type 1 subfamily. In terms of assembly, heterodimer of LeuC and LeuD. It depends on [4Fe-4S] cluster as a cofactor.

The catalysed reaction is (2R,3S)-3-isopropylmalate = (2S)-2-isopropylmalate. Its pathway is amino-acid biosynthesis; L-leucine biosynthesis; L-leucine from 3-methyl-2-oxobutanoate: step 2/4. In terms of biological role, catalyzes the isomerization between 2-isopropylmalate and 3-isopropylmalate, via the formation of 2-isopropylmaleate. The chain is 3-isopropylmalate dehydratase large subunit from Buchnera aphidicola subsp. Pemphigus spyrothecae.